The sequence spans 379 residues: 1-deoxy-D-xylulose 5-phosphate reductoisomerase (379 aa).

Thr10, Gly11, Ser12, Ile13, Gly36, Asn38, and Asn121 together coordinate NADPH. Lys122 lines the 1-deoxy-D-xylulose 5-phosphate pocket. Residue Glu123 participates in NADPH binding. Residue Asp147 participates in Mn(2+) binding. Positions 148, 149, 173, and 196 each coordinate 1-deoxy-D-xylulose 5-phosphate. Glu149 serves as a coordination point for Mn(2+). Residue Gly202 participates in NADPH binding. Positions 209, 214, 215, and 218 each coordinate 1-deoxy-D-xylulose 5-phosphate. Position 218 (Glu218) interacts with Mn(2+).

It belongs to the DXR family. Mg(2+) serves as cofactor. Mn(2+) is required as a cofactor.

The catalysed reaction is 2-C-methyl-D-erythritol 4-phosphate + NADP(+) = 1-deoxy-D-xylulose 5-phosphate + NADPH + H(+). Its pathway is isoprenoid biosynthesis; isopentenyl diphosphate biosynthesis via DXP pathway; isopentenyl diphosphate from 1-deoxy-D-xylulose 5-phosphate: step 1/6. Functionally, catalyzes the NADPH-dependent rearrangement and reduction of 1-deoxy-D-xylulose-5-phosphate (DXP) to 2-C-methyl-D-erythritol 4-phosphate (MEP). In Shouchella clausii (strain KSM-K16) (Alkalihalobacillus clausii), this protein is 1-deoxy-D-xylulose 5-phosphate reductoisomerase.